A 233-amino-acid chain; its full sequence is Phosphatidylserine decarboxylase proenzyme (233 aa).

S188 (schiff-base intermediate with substrate; via pyruvic acid) is an active-site residue. Residue S188 is modified to Pyruvic acid (Ser); by autocatalysis.

The protein belongs to the phosphatidylserine decarboxylase family. PSD-A subfamily. In terms of assembly, heterodimer of a large membrane-associated beta subunit and a small pyruvoyl-containing alpha subunit. Requires pyruvate as cofactor. Post-translationally, is synthesized initially as an inactive proenzyme. Formation of the active enzyme involves a self-maturation process in which the active site pyruvoyl group is generated from an internal serine residue via an autocatalytic post-translational modification. Two non-identical subunits are generated from the proenzyme in this reaction, and the pyruvate is formed at the N-terminus of the alpha chain, which is derived from the carboxyl end of the proenzyme. The post-translation cleavage follows an unusual pathway, termed non-hydrolytic serinolysis, in which the side chain hydroxyl group of the serine supplies its oxygen atom to form the C-terminus of the beta chain, while the remainder of the serine residue undergoes an oxidative deamination to produce ammonia and the pyruvoyl prosthetic group on the alpha chain.

The protein resides in the cell membrane. The catalysed reaction is a 1,2-diacyl-sn-glycero-3-phospho-L-serine + H(+) = a 1,2-diacyl-sn-glycero-3-phosphoethanolamine + CO2. It functions in the pathway phospholipid metabolism; phosphatidylethanolamine biosynthesis; phosphatidylethanolamine from CDP-diacylglycerol: step 2/2. Catalyzes the formation of phosphatidylethanolamine (PtdEtn) from phosphatidylserine (PtdSer). The chain is Phosphatidylserine decarboxylase proenzyme from Ruegeria sp. (strain TM1040) (Silicibacter sp.).